The sequence spans 137 residues: Holo-[acyl-carrier-protein] synthase (137 aa).

Mg(2+) is bound by residues aspartate 8 and glutamate 57.

It belongs to the P-Pant transferase superfamily. AcpS family. Mg(2+) is required as a cofactor.

The protein resides in the cytoplasm. It carries out the reaction apo-[ACP] + CoA = holo-[ACP] + adenosine 3',5'-bisphosphate + H(+). Functionally, transfers the 4'-phosphopantetheine moiety from coenzyme A to a Ser of acyl-carrier-protein. This chain is Holo-[acyl-carrier-protein] synthase, found in Cereibacter sphaeroides (strain ATCC 17025 / ATH 2.4.3) (Rhodobacter sphaeroides).